Here is a 185-residue protein sequence, read N- to C-terminus: Ribosome-recycling factor (185 aa).

Belongs to the RRF family.

It is found in the cytoplasm. Functionally, responsible for the release of ribosomes from messenger RNA at the termination of protein biosynthesis. May increase the efficiency of translation by recycling ribosomes from one round of translation to another. This chain is Ribosome-recycling factor, found in Xanthomonas euvesicatoria pv. vesicatoria (strain 85-10) (Xanthomonas campestris pv. vesicatoria).